The primary structure comprises 301 residues: Olfactory receptor 10AG1 (301 aa).

Over 1 to 16 (MEFVLLGFSDIPNLHW) the chain is Extracellular. A helical transmembrane segment spans residues 17–37 (MLFSIFLLMYLMILMCNGIII). At 38–45 (LLIKIHPA) the chain is on the cytoplasmic side. Residues 46–66 (LQTPMYFFLSNFSLLEICYVT) traverse the membrane as a helical segment. The Extracellular segment spans residues 67–90 (IIIPRMLMDIWTQKGNISLFACAT). Residue Asn82 is glycosylated (N-linked (GlcNAc...) asparagine). Cys88 and Cys180 are disulfide-bonded. The helical transmembrane segment at 91 to 111 (QMCFFLMLGGTECLLLTVMAY) threads the bilayer. The Cytoplasmic portion of the chain corresponds to 112–130 (DRYVAICKPLQYPLVMNHK). Residues 131-151 (VCIQLIIASWTITIPVVIGET) traverse the membrane as a helical segment. Topologically, residues 152-188 (CQIFLLPFCGTNTINHFFCDIPPILKLACGNIFVNEI) are extracellular. A helical membrane pass occupies residues 189–208 (TVHVVAVVFITVPFLLIVVS). Residues 209 to 228 (YGKIISNILKLSSARGKAKA) lie on the Cytoplasmic side of the membrane. A helical membrane pass occupies residues 229–249 (FSTCSSHLIVVILFFGAGTIT). At 250–262 (YLQPKPHQFQRMG) the chain is on the extracellular side. A helical transmembrane segment spans residues 263 to 283 (KLISLFYTILIPTLNPIIYTL). The Cytoplasmic segment spans residues 284-301 (RNKDIMVALRKLLAKLLT).

The protein belongs to the G-protein coupled receptor 1 family.

The protein localises to the cell membrane. In terms of biological role, odorant receptor. In Homo sapiens (Human), this protein is Olfactory receptor 10AG1 (OR10AG1).